Reading from the N-terminus, the 86-residue chain is uncharacterized protein (86 aa).

This is an uncharacterized protein from Haemophilus phage HP1 (strain HP1c1) (Bacteriophage HP1).